We begin with the raw amino-acid sequence, 147 residues long: Large ribosomal subunit protein bL9 (147 aa).

The protein belongs to the bacterial ribosomal protein bL9 family.

Functionally, binds to the 23S rRNA. The polypeptide is Large ribosomal subunit protein bL9 (Clostridium novyi (strain NT)).